The sequence spans 72 residues: Brevinin-2SN4 (72 aa).

The N-terminal stretch at 1-22 is a signal peptide; it reads MFTMKKPMLLLFFLGMISMSLC. Positions 23–40 are cleaved as a propeptide — removed in mature form; sequence QDERGADEDDGGEMTEEE. The cysteines at positions 66 and 72 are disulfide-linked.

This sequence belongs to the frog skin active peptide (FSAP) family. Brevinin subfamily. As to expression, expressed by the skin glands.

It localises to the secreted. In terms of biological role, antimicrobial peptide. Active against a variety of Gram-negative and Gram-positive bacterial strains. Not active against fungi. Shows very weak hemolytic activity against human erythrocytes. This is Brevinin-2SN4 from Sylvirana spinulosa (Fine-spined frog).